Reading from the N-terminus, the 550-residue chain is Carboxylesterase 4A (550 aa).

The signal sequence occupies residues 1-20 (MNWILCLSLTLLLVVQTAWG). An intrachain disulfide couples C88 to C116. The active-site Acyl-ester intermediate is S221. A disulfide bridge connects residues C273 and C284. N-linked (GlcNAc...) asparagine glycosylation is present at N276. The active-site Charge relay system is the E353. The N-linked (GlcNAc...) asparagine glycan is linked to N386. The Charge relay system role is filled by H465.

It belongs to the type-B carboxylesterase/lipase family.

Its subcellular location is the secreted. Probable carboxylesterase. The protein is Carboxylesterase 4A (CES4A) of Bos taurus (Bovine).